A 105-amino-acid chain; its full sequence is Late embryogenesis abundant protein Lea5-D (105 aa).

A disordered region spans residues 48–67 (KVERRDAMKESSSSETRAYS). The span at 57 to 67 (ESSSSETRAYS) shows a compositional bias: low complexity.

The protein belongs to the LEA type 3 family.

This chain is Late embryogenesis abundant protein Lea5-D (LEA5-D), found in Gossypium hirsutum (Upland cotton).